The chain runs to 344 residues: tRNA N6-adenosine threonylcarbamoyltransferase (344 aa).

Residues H111 and H115 each contribute to the Fe cation site. Substrate is bound by residues 134 to 138 (LVSGG), D167, G180, and N272. D300 is a binding site for Fe cation.

The protein belongs to the KAE1 / TsaD family. It depends on Fe(2+) as a cofactor.

The protein resides in the cytoplasm. The enzyme catalyses L-threonylcarbamoyladenylate + adenosine(37) in tRNA = N(6)-L-threonylcarbamoyladenosine(37) in tRNA + AMP + H(+). In terms of biological role, required for the formation of a threonylcarbamoyl group on adenosine at position 37 (t(6)A37) in tRNAs that read codons beginning with adenine. Is involved in the transfer of the threonylcarbamoyl moiety of threonylcarbamoyl-AMP (TC-AMP) to the N6 group of A37, together with TsaE and TsaB. TsaD likely plays a direct catalytic role in this reaction. This Idiomarina loihiensis (strain ATCC BAA-735 / DSM 15497 / L2-TR) protein is tRNA N6-adenosine threonylcarbamoyltransferase.